The primary structure comprises 1061 residues: MTNKALIPSQNSRLPAKPRPRAKGFVELLGRSNFSFLQGASSPEEMVSQAVEFGYDGMALCDLNGLYGVVRGFQTIQSPSLFTASPQVKENFHYLIGSELTLTDESSVVLIPMNKQGYSHLCEILTLGKRQAAKGFSKLSLEQIEKYNQGLLCLALPPWTDERYEKLEKIFDNRLYLPLWRDLTWESQEFCRQGFALEEKYKAQLFVTQRPFMHSPERKPLFDVLTCTLHHTTLAEAKNKLIQNSERCLKSLEDISWLWQDRLDLVEKTVEISARVTFSLNEIRYRYPASSLPSGMTPTEYMRHLTLKGAESRYPEGIPDKALKQIEHELELIKDLQYEDYFLTLKEICDFASERKILYQGRGSAANSVVCFCLGLTAIDPVKMDLLFERFLSRERREPPDIDIDFEHSRREEVIQHIYEKYNERHAAMVCTVIRYRSRMAIRETAKVFGMPLAKINAMIKFMGRDGMKRLLDPAVAADFGMEPGPWKMFMALAQQLHGFPRHLGIHTGGFLITQDPITEMVPVEKATMNGRYVIQWNKDDVDFLRLMKIDVLSLGMLTCLRKCFDLLRDVKGRDYSLATLPADDKPTYDMICRAETVGVFQIESRAQMNTLPRMQPRNFYDLVIEIALIRPGPLQGGMVHPFLKLRQNPPKEIKYAHPALEPILKKTMGIPIFQEQVMKMVVAVADFTPGEADELRRVMSSAWKRKATMGGIEQRLRTGFARHGISSEYADQIFKTIEGFANYGFPESHSASFALLTYASCYLKCHYPDVFACGLLNSQPMGFYAPRTIIAEAQRNGVVVAPLDVQKSDYDYTIEKTAAGDLLRVGLRSIYGIPEVLIRRIEDSRKEEGLYIDLADFIRRTQLPRSVLLKLAAAGAFESFNSNVRELIWNLESLSLDQQSFLWGHPKEQFELGEDDDEPEHLPFESNWDRLRREYDSKGYSVESHPMSVLRTYLHSKSEALREKRFVPYFSSEDLKRMKTKTKVRVAGLVAITQRPPTAKGMCFITLEDEFGFVNIVIHPEIYQKDRTTIYTRSLLEIHGQVEKVGAITNIRAERILPLG.

It belongs to the DNA polymerase type-C family. DnaE2 subfamily.

It is found in the cytoplasm. It carries out the reaction DNA(n) + a 2'-deoxyribonucleoside 5'-triphosphate = DNA(n+1) + diphosphate. DNA polymerase involved in damage-induced mutagenesis and translesion synthesis (TLS). It is not the major replicative DNA polymerase. In Bdellovibrio bacteriovorus (strain ATCC 15356 / DSM 50701 / NCIMB 9529 / HD100), this protein is Error-prone DNA polymerase.